Here is a 407-residue protein sequence, read N- to C-terminus: Lymphocyte transmembrane adapter 1 (407 aa).

The interval 1–25 is disordered; sequence MYSTPAPPEVTRRNSEPSTRQGTLG. Over 1 to 33 the chain is Extracellular; that stretch reads MYSTPAPPEVTRRNSEPSTRQGTLGSLQGEKGQ. Positions 16–25 are enriched in polar residues; sequence EPSTRQGTLG. Residues 34–54 form a helical; Signal-anchor for type III membrane protein membrane-spanning segment; the sequence is IIFPGFVVLLTIILVIIAACI. Topologically, residues 55–407 are cytoplasmic; the sequence is LWSWKKQKKR…LATETSDEDA (353 aa). Residues 109–131 form a disordered region; the sequence is ESLLSRASDSPEPEAPQANGSLQ. Residues Tyr185, Tyr260, Tyr286, and Tyr353 each carry the phosphotyrosine modification. Residues 331 to 388 are disordered; the sequence is SAQSEDSAMVHREEQSSEDSSDYETVLVAELEGRDWKQGPGTQHPSDEGTPGDLAGKL.

In terms of assembly, when phosphorylated, interacts with GRB2, PIK3R1 and GRAP2. Phosphorylated on tyrosines upon TCR or BCR activation; which leads to the recruitment of GRB2, PIK3R1 and GRAP2. In terms of tissue distribution, expressed in T-cells and B-cells.

The protein resides in the cell membrane. Functionally, negatively regulates TCR (T-cell antigen receptor)-mediated signaling in T-cells and BCR (B-cell antigen receptor)-mediated signaling in B-cells. In Mus musculus (Mouse), this protein is Lymphocyte transmembrane adapter 1 (Lax1).